A 326-amino-acid polypeptide reads, in one-letter code: Triacylglycerol lipase 2 (326 aa).

The (A/G)XSXG lipase motif motif lies at 142–146; the sequence is AHSMG.

Interacts with MIA40; forms mixed disulfide intermediates with MIA40.

The protein resides in the mitochondrion. It localises to the mitochondrion intermembrane space. It catalyses the reaction a triacylglycerol + H2O = a diacylglycerol + a fatty acid + H(+). It carries out the reaction 1,2,3-tri-(9Z-octadecenoyl)-glycerol + H2O = di-(9Z)-octadecenoylglycerol + (9Z)-octadecenoate + H(+). The catalysed reaction is 1,2,3-tributanoylglycerol + H2O = dibutanoylglycerol + butanoate + H(+). The enzyme catalyses 1,2,3-trioctanoylglycerol + H2O = dioctanoylglycerol + octanoate + H(+). It catalyses the reaction di-(9Z)-octadecenoylglycerol + H2O = (9Z-octadecenoyl)-glycerol + (9Z)-octadecenoate + H(+). It carries out the reaction dioctanoylglycerol + H2O = octanoylglycerol + octanoate + H(+). Mitochondrial triacylglycerol (TAG) lipase with activity toward long-chain diacylglycerols (DAGs) and triacylglycerols (TAGs). Involved in mitochondrial lipid metabolism. The chain is Triacylglycerol lipase 2 (TGL2) from Saccharomyces cerevisiae (strain ATCC 204508 / S288c) (Baker's yeast).